A 999-amino-acid polypeptide reads, in one-letter code: Sarcoplasmic/endoplasmic reticulum calcium ATPase 3 (999 aa).

Residues 1-48 (MEAAHSVPVQDVLSRFGVAESCGLSPEQVRRNREKYGPNELPAEERKS) are Cytoplasmic-facing. The chain crosses the membrane as a helical span at residues 49–69 (LWELVLEQFEDLLVRILLMAA). The Lumenal segment spans residues 70–89 (FLSFILAWFEEGEESTTAFV). The helical transmembrane segment at 90–110 (EPIVIIMILIANAVVGVWQER) threads the bilayer. The Cytoplasmic portion of the chain corresponds to 111-253 (NAESAIEALK…PEKTPLQQKL (143 aa)). The helical transmembrane segment at 254 to 273 (DEFSQQLSKVIFLVCIAVWV) threads the bilayer. Over 274 to 295 (INISHFSDPVHGGSWFRGAIYY) the chain is Lumenal. A helical transmembrane segment spans residues 296–313 (FKTSVALAVAAIPEGLPA). Valine 304, alanine 305, isoleucine 307, and glutamate 309 together coordinate Ca(2+). Over 314 to 757 (VITTCLALGT…EEGRAIYNNM (444 aa)) the chain is Cytoplasmic. The active-site 4-aspartylphosphate intermediate is aspartate 351. Positions 351 and 353 each coordinate Mg(2+). An ATP-binding site is contributed by threonine 353. The tract at residues 370 to 400 (EKVEGTQCSLHEFSITGSTYAPEGQILKDEK) is interaction with phospholamban 1. ATP contacts are provided by glutamate 442, arginine 489, lysine 515, arginine 560, threonine 625, glycine 626, aspartate 627, arginine 678, and lysine 684. Aspartate 703 is a Mg(2+) binding site. Asparagine 706 lines the ATP pocket. Residues 758 to 777 (KQFIRYLISSNVGEVVCIFL) form a helical membrane-spanning segment. Residues asparagine 768 and glutamate 771 each contribute to the Ca(2+) site. The Lumenal segment spans residues 778–787 (TAILGLPEAL). A helical membrane pass occupies residues 788–808 (IPVQLLWVNLVTDGLPATALG). Residues 788-808 (IPVQLLWVNLVTDGLPATALG) form an interaction with phospholamban 2 region. Residues asparagine 796, threonine 799, and aspartate 800 each contribute to the Ca(2+) site. Over 809–828 (FNPPDLDIMDKLPRNPKEPL) the chain is Cytoplasmic. The helical transmembrane segment at 829-851 (ISGWLFFRYLAIGVYVGLATVGA) threads the bilayer. Residues 852–897 (ATWWFLYDAEGPQVSFHQLRNFMRCTEDNPIFEGVNCEIFESRYPT) are Lumenal-facing. A helical transmembrane segment spans residues 898-917 (TMALSVLVTIEMCNALNSVS). Glutamate 908 serves as a coordination point for Ca(2+). Residues 918–930 (ENQSLLRMPPWLN) are Cytoplasmic-facing. The chain crosses the membrane as a helical span at residues 931-949 (IWLLGAIVMSMALHFFILY). Residues 950–964 (VKPMPLIFQVTPLSW) lie on the Lumenal side of the membrane. Residues 965-985 (PQWVVVLKISLPVILLDEGLK) form a helical membrane-spanning segment. Residues 986-999 (YLSRNHLEGEEDKK) lie on the Cytoplasmic side of the membrane.

This sequence belongs to the cation transport ATPase (P-type) (TC 3.A.3) family. Type IIA subfamily. In terms of assembly, interacts with sarcolipin (SLN). Interacts with phospholamban (PLN). Interacts with myoregulin (MRLN). Interacts with DWORF. Mg(2+) serves as cofactor. In terms of tissue distribution, found in spleen, lung, intestine and brain.

The protein resides in the endoplasmic reticulum membrane. Its subcellular location is the sarcoplasmic reticulum membrane. It carries out the reaction Ca(2+)(in) + ATP + H2O = Ca(2+)(out) + ADP + phosphate + H(+). Inhibited by sarcolipin (SLN), phospholamban (PLN) and myoregulin (MRLN). Enhanced by DWORF; DWORF increases activity by displacing sarcolipin (SLN), phospholamban (PLN) and myoregulin (MRLN). Its function is as follows. This magnesium-dependent enzyme catalyzes the hydrolysis of ATP coupled with the transport of calcium. Transports calcium ions from the cytosol into the sarcoplasmic/endoplasmic reticulum lumen. Contributes to calcium sequestration involved in muscular excitation/contraction. This is Sarcoplasmic/endoplasmic reticulum calcium ATPase 3 (ATP2A3) from Gallus gallus (Chicken).